Consider the following 141-residue polypeptide: Large ribosomal subunit protein uL22 (141 aa).

The interval 110-141 (EEKKTVAKKTTTTKAPAKKTTSTKKATAKKES) is disordered. Residues 117–134 (KKTTTTKAPAKKTTSTKK) are compositionally biased toward low complexity.

The protein belongs to the universal ribosomal protein uL22 family. As to quaternary structure, part of the 50S ribosomal subunit.

In terms of biological role, this protein binds specifically to 23S rRNA; its binding is stimulated by other ribosomal proteins, e.g. L4, L17, and L20. It is important during the early stages of 50S assembly. It makes multiple contacts with different domains of the 23S rRNA in the assembled 50S subunit and ribosome. Functionally, the globular domain of the protein is located near the polypeptide exit tunnel on the outside of the subunit, while an extended beta-hairpin is found that lines the wall of the exit tunnel in the center of the 70S ribosome. In Campylobacter jejuni subsp. doylei (strain ATCC BAA-1458 / RM4099 / 269.97), this protein is Large ribosomal subunit protein uL22.